Consider the following 394-residue polypeptide: Lipid-A-disaccharide synthase (394 aa).

The protein belongs to the LpxB family.

The catalysed reaction is 2-N,3-O-bis[(3R)-3-hydroxytetradecanoyl]-alpha-D-glucosaminyl 1-phosphate + UDP-2-N,3-O-bis[(3R)-3-hydroxytetradecanoyl]-alpha-D-glucosamine = lipid A disaccharide (E. coli) + UDP + H(+). The enzyme catalyses a lipid X + a UDP-2-N,3-O-bis[(3R)-3-hydroxyacyl]-alpha-D-glucosamine = a lipid A disaccharide + UDP + H(+). The protein operates within glycolipid biosynthesis; lipid IV(A) biosynthesis; lipid IV(A) from (3R)-3-hydroxytetradecanoyl-[acyl-carrier-protein] and UDP-N-acetyl-alpha-D-glucosamine: step 5/6. Its function is as follows. Condensation of UDP-2,3-diacylglucosamine and 2,3-diacylglucosamine-1-phosphate to form lipid A disaccharide, a precursor of lipid A, a phosphorylated glycolipid that anchors the lipopolysaccharide to the outer membrane of the cell. This chain is Lipid-A-disaccharide synthase, found in Yersinia pestis.